We begin with the raw amino-acid sequence, 611 residues long: Protein Spindly-A (611 aa).

Residues 1 to 390 (MEESETVLKL…KENEKIKDEL (390 aa)) adopt a coiled-coil conformation. The disordered stretch occupies residues 487–611 (TCTAESTDGR…PNATTQCPQQ (125 aa)). Positions 493-511 (TDGRIHSKEDLSLSTKEQD) are enriched in basic and acidic residues. Residues 552–567 (HNCSVTSASPRSTSED) show a composition bias toward polar residues. Positions 570 to 583 (SESKRFDEEQEKRK) are enriched in basic and acidic residues. Residues 602–611 (PNATTQCPQQ) are compositionally biased toward polar residues.

This sequence belongs to the Spindly family.

It localises to the chromosome. The protein localises to the centromere. The protein resides in the kinetochore. In terms of biological role, required for the localization of dynein and dynactin to the mitotic kintochore. Dynein is believed to control the initial lateral interaction between the kinetochore and spindle microtubules and to facilitate the subsequent formation of end-on kinetochore-microtubule attachments mediated by the NDC80 complex. This Xenopus laevis (African clawed frog) protein is Protein Spindly-A (spdl1-a).